Consider the following 589-residue polypeptide: Protein POF1B (589 aa).

Residues 334–443 are a coiled coil; sequence TFSNIREELG…QNLRMQVSET (110 aa).

In terms of assembly, interacts with nonmuscle actin.

The protein localises to the cell junction. It localises to the tight junction. Its function is as follows. Plays a key role in the organization of epithelial monolayers by regulating the actin cytoskeleton. May be involved in ovary development. In Homo sapiens (Human), this protein is Protein POF1B (POF1B).